The chain runs to 540 residues: Chaperonin GroEL 1 (540 aa).

ATP is bound by residues 29–32, 86–90, G413, 477–479, and D493; these read TLGP, DGTTT, and NAA.

The protein belongs to the chaperonin (HSP60) family. Forms a cylinder of 14 subunits composed of two heptameric rings stacked back-to-back. Interacts with the co-chaperonin GroES.

It localises to the cytoplasm. The catalysed reaction is ATP + H2O + a folded polypeptide = ADP + phosphate + an unfolded polypeptide.. Its function is as follows. Together with its co-chaperonin GroES, plays an essential role in assisting protein folding. The GroEL-GroES system forms a nano-cage that allows encapsulation of the non-native substrate proteins and provides a physical environment optimized to promote and accelerate protein folding. In Salinispora arenicola (strain CNS-205), this protein is Chaperonin GroEL 1.